Consider the following 367-residue polypeptide: MNKPKVVVGLSGGVDSSVAALRLQQQGYPTSGLFMKNWVDFADESECTVAQDREDAQAVTSLLGISFHEANFAMEYWDRVFHYFLEEYRLGRTPNPDILCNREIKFKTFLDHALALGNTLIATGHYARIDQKEGRYRLLKGRDKNKDQSYFLYTLGQKQLSHTLFPLGELEKPQVRRIAIQARLPNHSKKDSTGICFIGERRFKEFLSRYLPAQPGEMRTPDKEWIGQHDGLMYYTLGQRRGLGIGGRKNSNGAPWFVVGKNLPQNTLYVAQGRHHPWLKSLILEANQLHWVAGHPPPLPYSCTAKIRYRQTDQHCTLTAIANGYIKVIFNAPQYAATPGQAIVFYQDDECLGGGTITTTDALGIQS.

ATP contacts are provided by residues 9-16 (GLSGGVDS) and M35. Positions 95 to 97 (NPD) are interaction with target base in tRNA. C100 acts as the Nucleophile in catalysis. C100 and C196 form a disulfide bridge. G124 provides a ligand contact to ATP. Residues 146-148 (KDQ) form an interaction with tRNA region. Residue C196 is the Cysteine persulfide intermediate of the active site. Residues 308 to 309 (RY) are interaction with tRNA.

Belongs to the MnmA/TRMU family.

The protein resides in the cytoplasm. The catalysed reaction is S-sulfanyl-L-cysteinyl-[protein] + uridine(34) in tRNA + AH2 + ATP = 2-thiouridine(34) in tRNA + L-cysteinyl-[protein] + A + AMP + diphosphate + H(+). Catalyzes the 2-thiolation of uridine at the wobble position (U34) of tRNA, leading to the formation of s(2)U34. This chain is tRNA-specific 2-thiouridylase MnmA, found in Nitrosococcus oceani (strain ATCC 19707 / BCRC 17464 / JCM 30415 / NCIMB 11848 / C-107).